Consider the following 158-residue polypeptide: Cyclic pyranopterin monophosphate synthase (158 aa).

Substrate-binding positions include 75 to 77 and 113 to 114; these read LCH and ME. The active site involves aspartate 128.

This sequence belongs to the MoaC family. Homohexamer; trimer of dimers.

It catalyses the reaction (8S)-3',8-cyclo-7,8-dihydroguanosine 5'-triphosphate = cyclic pyranopterin phosphate + diphosphate. It participates in cofactor biosynthesis; molybdopterin biosynthesis. Catalyzes the conversion of (8S)-3',8-cyclo-7,8-dihydroguanosine 5'-triphosphate to cyclic pyranopterin monophosphate (cPMP). This Paraburkholderia phytofirmans (strain DSM 17436 / LMG 22146 / PsJN) (Burkholderia phytofirmans) protein is Cyclic pyranopterin monophosphate synthase.